Consider the following 345-residue polypeptide: MSDVALKRNSSFFRAKARLTLLKRRDGGVISRSLEHRRSSRRRSSVSAPTRRVSGTLAKLGADDRRQFFDAFFRMTAVSPEETVSLLRSMTVPVIQQENISLPYDINAKFAPGDCISLSEMGYTLEMGGCCSLCSYGWSTTTPPELPALELAFMHHLSSVVEFKELVTSLRVCAGNSIVGNGAYENEGLLRMIKHLLEQSTLFYAYYTVKGGVSHDFRVLISEDGGGDGGSPAYAMYFVFKPGSPLHLGAKLIRQLIFNCPGYKWHADVHEGAFLLVVTRDRCSAIPEPRRVKLDPEDVYRRYCDVLVTEEKVHDYSRLYSTFSTYCPPASRREQTAAPATAKQV.

A CCCH-type zinc finger spans residues 115 to 247; that stretch reads CISLSEMGYT…FVFKPGSPLH (133 aa).

It belongs to the herpesviridae NEC1 protein family. As to quaternary structure, forms a heterohexameric complex with NEC2. Interacts with capsid vertex specific component 2/CVC2; this interaction directs the capsid to the host inner nuclear membrane to initiate budding. Post-translationally, phosphorylated at serine residues in the N-terminus. This phosphorylation regulates the localization within the inner nuclear membrane.

It is found in the host nucleus inner membrane. Functionally, plays an essential role in virion nuclear egress, the first step of virion release from infected cell. Within the host nucleus, NEC1 interacts with the newly formed capsid through the vertexes and directs it to the inner nuclear membrane by associating with NEC2. Induces the budding of the capsid at the inner nuclear membrane as well as its envelopment into the perinuclear space. There, the NEC1/NEC2 complex promotes the fusion of the enveloped capsid with the outer nuclear membrane and the subsequent release of the viral capsid into the cytoplasm where it will reach the secondary budding sites in the host Golgi or trans-Golgi network. This Psittacid herpesvirus 1 (isolate Amazon parrot/-/97-0001/1997) (PsHV-1) protein is Nuclear egress protein 1.